We begin with the raw amino-acid sequence, 452 residues long: UPF0761 membrane protein Bpet3042 (452 aa).

6 consecutive transmembrane segments (helical) span residues 56-76 (VLGI…FPVF), 114-134 (LTAI…MTID), 153-173 (ALVY…SLWA), 195-215 (AISF…FVVV), 225-245 (ALVG…AFAY), and 259-279 (AFAT…AVLF).

The protein belongs to the UPF0761 family.

Its subcellular location is the cell inner membrane. This is UPF0761 membrane protein Bpet3042 from Bordetella petrii (strain ATCC BAA-461 / DSM 12804 / CCUG 43448).